Consider the following 67-residue polypeptide: Large ribosomal subunit protein bL31 (67 aa).

Belongs to the bacterial ribosomal protein bL31 family. Type A subfamily. Part of the 50S ribosomal subunit.

In terms of biological role, binds the 23S rRNA. The chain is Large ribosomal subunit protein bL31 from Helicobacter acinonychis (strain Sheeba).